The primary structure comprises 127 residues: uncharacterized protein (127 aa).

The interval 1–24 is disordered; sequence PLKTKPIDNNLPHRTGYNQASKQQ.

This is an uncharacterized protein from Homo sapiens (Human).